The following is a 77-amino-acid chain: Small ribosomal subunit protein bS16c (77 aa).

This sequence belongs to the bacterial ribosomal protein bS16 family.

The protein localises to the plastid. It localises to the cyanelle. The chain is Small ribosomal subunit protein bS16c from Cyanophora paradoxa.